Reading from the N-terminus, the 368-residue chain is Queuine tRNA-ribosyltransferase (368 aa).

The active-site Proton acceptor is the Asp-89. Residues 89–93, Asp-143, Gln-187, and Gly-214 each bind substrate; that span reads DSGGF. The Nucleophile role is filled by Asp-264. Residues 269–273 form an RNA binding; important for wobble base 34 recognition region; it reads TRNAR. Residues Cys-302, Cys-304, Cys-307, and His-333 each contribute to the Zn(2+) site.

It belongs to the queuine tRNA-ribosyltransferase family. As to quaternary structure, homodimer. Within each dimer, one monomer is responsible for RNA recognition and catalysis, while the other monomer binds to the replacement base PreQ1. Requires Zn(2+) as cofactor.

The enzyme catalyses 7-aminomethyl-7-carbaguanine + guanosine(34) in tRNA = 7-aminomethyl-7-carbaguanosine(34) in tRNA + guanine. It functions in the pathway tRNA modification; tRNA-queuosine biosynthesis. Its function is as follows. Catalyzes the base-exchange of a guanine (G) residue with the queuine precursor 7-aminomethyl-7-deazaguanine (PreQ1) at position 34 (anticodon wobble position) in tRNAs with GU(N) anticodons (tRNA-Asp, -Asn, -His and -Tyr). Catalysis occurs through a double-displacement mechanism. The nucleophile active site attacks the C1' of nucleotide 34 to detach the guanine base from the RNA, forming a covalent enzyme-RNA intermediate. The proton acceptor active site deprotonates the incoming PreQ1, allowing a nucleophilic attack on the C1' of the ribose to form the product. After dissociation, two additional enzymatic reactions on the tRNA convert PreQ1 to queuine (Q), resulting in the hypermodified nucleoside queuosine (7-(((4,5-cis-dihydroxy-2-cyclopenten-1-yl)amino)methyl)-7-deazaguanosine). The chain is Queuine tRNA-ribosyltransferase from Blochmanniella pennsylvanica (strain BPEN).